We begin with the raw amino-acid sequence, 454 residues long: Inner membrane transport protein YajR (454 aa).

Over M1–T14 the chain is Periplasmic. A helical transmembrane segment spans residues W15–L35. Over T36 to E47 the chain is Cytoplasmic. Residues A48–F68 traverse the membrane as a helical segment. The Periplasmic segment spans residues G69–G84. Residues L85 to I105 form a helical membrane-spanning segment. Over L106–M137 the chain is Cytoplasmic. A helical transmembrane segment spans residues A138–I158. Topologically, residues T159–H165 are periplasmic. A helical membrane pass occupies residues A166 to V186. Residues P187–K216 are Cytoplasmic-facing. The helical transmembrane segment at L217–G237 threads the bilayer. Topologically, residues Q238–V252 are periplasmic. A helical membrane pass occupies residues Y253 to V273. Residues K274 to Q279 are Cytoplasmic-facing. A helical membrane pass occupies residues V280–T300. The Periplasmic portion of the chain corresponds to Q301–V306. Residues V307–I327 form a helical membrane-spanning segment. Residues S328–M340 are Cytoplasmic-facing. The helical transmembrane segment at G341 to I361 threads the bilayer. Residues N362 to G363 are Periplasmic-facing. A helical membrane pass occupies residues M364 to V384. Residues A385–A454 lie on the Cytoplasmic side of the membrane.

Belongs to the major facilitator superfamily.

The protein resides in the cell inner membrane. The chain is Inner membrane transport protein YajR (yajR) from Escherichia coli (strain K12).